The sequence spans 308 residues: Putative S-adenosyl-L-methionine-dependent methyltransferase Mmcs_1045 (308 aa).

S-adenosyl-L-methionine contacts are provided by residues D133 and 162 to 163; that span reads DL.

It belongs to the UPF0677 family.

Its function is as follows. Exhibits S-adenosyl-L-methionine-dependent methyltransferase activity. This is Putative S-adenosyl-L-methionine-dependent methyltransferase Mmcs_1045 from Mycobacterium sp. (strain MCS).